A 169-amino-acid chain; its full sequence is Putative phosphoesterase SERP0604 (169 aa).

The active-site Proton donor is H34. 2 consecutive short sequence motifs (HXTX) follow at residues 34 to 37 (HITI) and 115 to 118 (HFTI). Residue H115 is the Proton acceptor of the active site.

This sequence belongs to the 2H phosphoesterase superfamily. YjcG family.

This chain is Putative phosphoesterase SERP0604, found in Staphylococcus epidermidis (strain ATCC 35984 / DSM 28319 / BCRC 17069 / CCUG 31568 / BM 3577 / RP62A).